The chain runs to 361 residues: tRNA/tmRNA (uracil-C(5))-methyltransferase (361 aa).

5 residues coordinate S-adenosyl-L-methionine: Gln185, Tyr213, Asn218, Glu234, and Asp294. Cys319 serves as the catalytic Nucleophile. Glu353 acts as the Proton acceptor in catalysis.

This sequence belongs to the class I-like SAM-binding methyltransferase superfamily. RNA M5U methyltransferase family. TrmA subfamily.

It catalyses the reaction uridine(54) in tRNA + S-adenosyl-L-methionine = 5-methyluridine(54) in tRNA + S-adenosyl-L-homocysteine + H(+). The enzyme catalyses uridine(341) in tmRNA + S-adenosyl-L-methionine = 5-methyluridine(341) in tmRNA + S-adenosyl-L-homocysteine + H(+). Functionally, dual-specificity methyltransferase that catalyzes the formation of 5-methyluridine at position 54 (m5U54) in all tRNAs, and that of position 341 (m5U341) in tmRNA (transfer-mRNA). This Pseudomonas putida (strain GB-1) protein is tRNA/tmRNA (uracil-C(5))-methyltransferase.